The chain runs to 644 residues: 1-deoxy-D-xylulose-5-phosphate synthase (644 aa).

Thiamine diphosphate contacts are provided by residues His-78 and 120-122; that span reads GHA. Position 149 (Asp-149) interacts with Mg(2+). Thiamine diphosphate is bound by residues 150–151, Asn-178, and Glu-373; that span reads AA. Asn-178 contributes to the Mg(2+) binding site.

It belongs to the transketolase family. DXPS subfamily. In terms of assembly, homodimer. It depends on Mg(2+) as a cofactor. Thiamine diphosphate serves as cofactor.

The enzyme catalyses D-glyceraldehyde 3-phosphate + pyruvate + H(+) = 1-deoxy-D-xylulose 5-phosphate + CO2. The protein operates within metabolic intermediate biosynthesis; 1-deoxy-D-xylulose 5-phosphate biosynthesis; 1-deoxy-D-xylulose 5-phosphate from D-glyceraldehyde 3-phosphate and pyruvate: step 1/1. Catalyzes the acyloin condensation reaction between C atoms 2 and 3 of pyruvate and glyceraldehyde 3-phosphate to yield 1-deoxy-D-xylulose-5-phosphate (DXP). The polypeptide is 1-deoxy-D-xylulose-5-phosphate synthase (Chlamydia abortus (strain DSM 27085 / S26/3) (Chlamydophila abortus)).